Reading from the N-terminus, the 514-residue chain is Na(+)/H(+) antiporter NhaB (514 aa).

12 helical membrane-spanning segments follow: residues 23-43 (LALLVFLIVNPFIFLANPFVA), 63-83 (PLLPGGLLAIEAVIIGMTSAA), 97-117 (LLLMFMVAGIYFMKQLLLFIF), 120-140 (LLLSIRSKMVLSLAFCVAAAF), 144-164 (FLDALTVVAVVISVAVGFYGI), 202-222 (LMMHAGVGTALGGVMTMVGEP), 238-258 (FFLRMSPVTVPVLVCGLLTCM), 303-323 (AVIGVWLVTALALHLAEVGLI), 357-377 (LTVFFSIVAVIIDQHLFAPII), 391-411 (LFYLFNGLLSSISDNVFVGTI), 447-467 (ATPNGQAAFLFLLTSALAPLI), and 475-495 (VWMALPYTIVLTLIGLLCVEF).

It belongs to the NhaB Na(+)/H(+) (TC 2.A.34) antiporter family.

The protein localises to the cell inner membrane. It catalyses the reaction 2 Na(+)(in) + 3 H(+)(out) = 2 Na(+)(out) + 3 H(+)(in). Functionally, na(+)/H(+) antiporter that extrudes sodium in exchange for external protons. The protein is Na(+)/H(+) antiporter NhaB of Salmonella paratyphi A (strain ATCC 9150 / SARB42).